The primary structure comprises 259 residues: MTLLPFTCLILLYSLGSVMSEKTNPNLTLHDVTDKLEGDDEKYATALKTCGEVFAEVEAIFNDENYLSHAGWFKDESNNEGDVVYAKDTPHGRMVTISTELPMPVEDVMKETWNGMEALPEWNQNINFAARIAAPTSNFDIVTYGNNDVLVVSGREFVSARIWRKVGDGFILASRSVTVPSFKSKHKGKVRAHLHLAGARFRPNPENPETTLTDVVMLADLKGYLPKMIVNQVIGRIMIMDTVTNRRHFQNLKAKRTNN.

The first 20 residues, 1-20 (MTLLPFTCLILLYSLGSVMS), serve as a signal peptide directing secretion. The region spanning 43–254 (YATALKTCGE…NRRHFQNLKA (212 aa)) is the START domain.

The chain is Steroidogenic acute regulatory-like protein 1 (strl-1) from Caenorhabditis elegans.